A 541-amino-acid chain; its full sequence is Calcium-dependent protein kinase 26 (541 aa).

Over residues Met-1–Ala-11 the composition is skewed to gly residues. Residues Met-1 to Arg-74 form a disordered region. The N-myristoyl glycine moiety is linked to residue Gly-2. The span at Ala-38–Pro-67 shows a compositional bias: low complexity. The Protein kinase domain maps to Tyr-83–Ile-341. ATP is bound by residues Leu-89 to Thr-97 and Lys-112. The active-site Proton acceptor is Asp-207. The autoinhibitory domain stretch occupies residues Ala-347 to Ile-377. 4 consecutive EF-hand domains span residues Glu-384–Lys-419, Phe-420–Met-455, Asp-456–Tyr-491, and Ala-493–Cys-526. Residues Asp-397, Asp-399, Ser-401, Thr-403, Glu-408, Asp-433, Asp-435, Asn-437, Glu-444, Asp-469, Asp-471, Ser-473, Tyr-475, Glu-480, Asp-504, Asn-506, Asp-508, Arg-510, and Glu-515 each contribute to the Ca(2+) site.

Belongs to the protein kinase superfamily. Ser/Thr protein kinase family. CDPK subfamily. In terms of tissue distribution, specifically expressed in heading panicles, spikelets and mature pollen grains. Not expressed in vegetative tissues.

It localises to the membrane. The enzyme catalyses L-seryl-[protein] + ATP = O-phospho-L-seryl-[protein] + ADP + H(+). It carries out the reaction L-threonyl-[protein] + ATP = O-phospho-L-threonyl-[protein] + ADP + H(+). With respect to regulation, activated by calcium. Autophosphorylation may play an important role in the regulation of the kinase activity. May play a role in signal transduction pathways that involve calcium as a second messenger. The protein is Calcium-dependent protein kinase 26 of Oryza sativa subsp. japonica (Rice).